A 56-amino-acid chain; its full sequence is Endoglucanase Cel5A (56 aa).

The active-site Nucleophile is E45.

The protein belongs to the glycosyl hydrolase 5 (cellulase A) family.

It localises to the secreted. It is found in the extracellular space. The enzyme catalyses Endohydrolysis of (1-&gt;4)-beta-D-glucosidic linkages in cellulose, lichenin and cereal beta-D-glucans.. Its function is as follows. Has avicelase and carboxymethylcellulase activity. This Gloeophyllum trabeum (Brown rot fungus) protein is Endoglucanase Cel5A.